The following is a 134-amino-acid chain: UPF0412 protein YaaI (134 aa).

The first 23 residues, Met-1–Ala-23, serve as a signal peptide directing secretion.

It belongs to the UPF0412 family.

The chain is UPF0412 protein YaaI from Salmonella paratyphi A (strain ATCC 9150 / SARB42).